Here is a 179-residue protein sequence, read N- to C-terminus: MEGEELIYHNIINEILVGYIKYYMNDISEHELSPYQQQIKKILTYYDDCLNKQVTITFSLTSAQEIKTQFTEVVTELFKDLINWGRICGFIVFSARMAKYCKDANNHLESTVITTAYNFMKHNLLPWMISHGGQEEFLAFSLHSDIYSVIFNIKYFLSKFCNHMFLKSCVHLLRNCNLI.

A BH1 motif is present at residues 76–95 (ELFKDLINWGRICGFIVFSA). The BH2 motif lies at 126 to 141 (PWMISHGGQEEFLAFS).

The protein belongs to the Bcl-2 family. In terms of assembly, interacts with host BECN1 (via BH3 homology domain); this interaction allows the virus to inhibit BECN1, and thus autophagy. Interacts with host BID. Interacts with host BAX.

It is found in the host mitochondrion. It localises to the host endoplasmic reticulum. Its function is as follows. Suppresses apoptosis in host cell to promote the viral replication. Has the ability to potentially bind to all the members of the proapoptotic Bcl-2 family. Inhibits autophagy by interacting with host Beclin 1 (BECN1). This chain is Apoptosis regulator Bcl-2 homolog, found in African swine fever virus (isolate Pig/Kenya/KEN-50/1950) (ASFV).